We begin with the raw amino-acid sequence, 60 residues long: Light-harvesting protein B-800/850 alpha chain (60 aa).

Topologically, residues 1–14 (MNNAKIWTVVKPST) are cytoplasmic. A helical membrane pass occupies residues 15 to 35 (GIPLILGAVAVAALIVHAGLL). Position 31 (histidine 31) interacts with a bacteriochlorophyll. The Periplasmic segment spans residues 36–60 (TNTTWFANYWNGNPMATVVAVAPAQ).

The protein belongs to the antenna complex alpha subunit family. The core complex is formed by different alpha and beta chains, binding bacteriochlorophyll molecules, and arranged most probably in tetrameric structures disposed around the reaction center. The non-pigmented gamma chains may constitute additional components.

The protein resides in the cell inner membrane. In terms of biological role, antenna complexes are light-harvesting systems, which transfer the excitation energy to the reaction centers. The protein is Light-harvesting protein B-800/850 alpha chain (pucA) of Rhodobacter capsulatus (Rhodopseudomonas capsulata).